We begin with the raw amino-acid sequence, 349 residues long: Thioredoxin-related transmembrane protein 4 (349 aa).

The signal sequence occupies residues 1–23 (MAGGRCGPQLTALLAAWIAAVAA). One can recognise a Thioredoxin domain in the interval 30 to 137 (AALPPEQSRV…FEDLQNYILE (108 aa)). Catalysis depends on nucleophile residues cysteine 64 and cysteine 67. Cysteine 64 and cysteine 67 are disulfide-bonded. Residues 190–210 (VFFVIATLVFGLFMGLVLVVI) form a helical membrane-spanning segment. The span at 225–240 (RSEQNRRSEEAHRAEQ) shows a compositional bias: basic and acidic residues. Residues 225-349 (RSEQNRRSEE…RKSQHADKGL (125 aa)) form a disordered region. 2 stretches are compositionally biased toward acidic residues: residues 242–284 (QDAE…EEDN) and 312–321 (VEPEEAEEGI). Phosphoserine is present on residues serine 251 and serine 259. The span at 335–349 (DSLRQRKSQHADKGL) shows a compositional bias: basic and acidic residues.

It localises to the nucleus inner membrane. The protein resides in the endoplasmic reticulum membrane. This chain is Thioredoxin-related transmembrane protein 4 (TMX4), found in Homo sapiens (Human).